Here is a 122-residue protein sequence, read N- to C-terminus: Large ribosomal subunit protein uL14 (122 aa).

This sequence belongs to the universal ribosomal protein uL14 family. Part of the 50S ribosomal subunit. Forms a cluster with proteins L3 and L19. In the 70S ribosome, L14 and L19 interact and together make contacts with the 16S rRNA in bridges B5 and B8.

In terms of biological role, binds to 23S rRNA. Forms part of two intersubunit bridges in the 70S ribosome. This is Large ribosomal subunit protein uL14 from Ralstonia nicotianae (strain ATCC BAA-1114 / GMI1000) (Ralstonia solanacearum).